A 447-amino-acid polypeptide reads, in one-letter code: Keratin, type I cytoskeletal 15 (447 aa).

The segment at 1-93 is head; it reads MATTFLQTSS…GGDGGLLSGN (93 aa). Ser16, Ser28, Ser33, and Ser47 each carry phosphoserine. Residues 94 to 129 form a coil 1A region; the sequence is EKVTMQNLNDRLASYLDKVRALEEANTELEVKIRDW. Residues 94 to 406 enclose the IF rod domain; the sequence is EKVTMQNLND…NLLEGQDAKM (313 aa). Position 120 is a phosphothreonine (Thr120). The linker 1 stretch occupies residues 130 to 148; it reads YQKQSPASPDRDYSHYFKT. Positions 149 to 240 are coil 1B; sequence MEEIRDKILA…KNHEEEMKEF (92 aa). A linker 12 region spans residues 241-260; sequence SSQLAGQVNVEMDAAPGVDL. A coil 2 region spans residues 261-402; the sequence is TRMLAEMREQ…STYRNLLEGQ (142 aa). Residue Lys289 forms a Glycyl lysine isopeptide (Lys-Gly) (interchain with G-Cter in SUMO2) linkage. 2 positions are modified to phosphothreonine: Thr290 and Thr312. Residues 403–447 are tail; sequence DAKMAAIGVREASLRGGSSGGGSNFHISVEESVDGKVVSSRKRES. Residue Lys438 forms a Glycyl lysine isopeptide (Lys-Gly) (interchain with G-Cter in SUMO1); alternate linkage. Lys438 participates in a covalent cross-link: Glycyl lysine isopeptide (Lys-Gly) (interchain with G-Cter in SUMO2); alternate.

The protein belongs to the intermediate filament family. As to quaternary structure, heterotetramer of two type I and two type II keratins. Forms a heterodimer with KRT14. Interacts with NOD2.

This Rattus norvegicus (Rat) protein is Keratin, type I cytoskeletal 15.